A 66-amino-acid polypeptide reads, in one-letter code: Large ribosomal subunit protein uL29 (66 aa).

It belongs to the universal ribosomal protein uL29 family.

The sequence is that of Large ribosomal subunit protein uL29 from Nitrosococcus oceani (strain ATCC 19707 / BCRC 17464 / JCM 30415 / NCIMB 11848 / C-107).